Reading from the N-terminus, the 510-residue chain is Major facilitator superfamily domain-containing protein 8 (510 aa).

At 1–38 the chain is on the cytoplasmic side; it reads MASIDDDDDERTPLLQDSHIGELVETQKQLKSRWWSIR. The Dileucine internalization motif signature appears at 14-15; it reads LL. The chain crosses the membrane as a helical span at residues 39-59; it reads VMYLTMFLSSVGFSIVMTSIW. Over 60 to 72 the chain is Extracellular; sequence PYLQKVDQSADAS. A helical membrane pass occupies residues 73–93; it reads FLGWVIASFSLGQMVASPLFG. At 94–103 the chain is on the cytoplasmic side; it reads LWSNHRPRRE. Residues 104 to 124 traverse the membrane as a helical segment; sequence PLVVSITILVAASCLYAYVHV. Topologically, residues 125 to 132 are extracellular; sequence PASHNKYY. A helical transmembrane segment spans residues 133–155; it reads MLLARTFVGFGSGNVAVVRSYVA. Residues 156–171 are Cytoplasmic-facing; it reads GATSLSERTGAMANIS. Residues 172 to 192 traverse the membrane as a helical segment; sequence AFQAMGFILGPAFQAALSVIG. Over 193 to 209 the chain is Extracellular; the sequence is ETGITINGISLQVNMYT. The chain crosses the membrane as a helical span at residues 210 to 230; the sequence is APALMGALLGIGNIILIFAIF. Residues 231–264 lie on the Cytoplasmic side of the membrane; that stretch reads REHRVDDLEKNVSSINSESEVTDVEKANEGPIDQ. Residues 265 to 285 form a helical membrane-spanning segment; that stretch reads IAVISSNILFFVVLFVFAIFE. Residues 286–302 lie on the Extracellular side of the membrane; sequence TISTPLTMDMYAWTRTQ. Residues 303 to 323 form a helical membrane-spanning segment; the sequence is AVFYNGIILAAVGVESVIVFL. At 324-335 the chain is on the cytoplasmic side; that stretch reads TVKILCKKTGER. A helical membrane pass occupies residues 336-356; that stretch reads VLLLGGLAVIWIGFFILLPWG. Over 357–406 the chain is Extracellular; that stretch reads NQMPKIQWTDLQNATIHNTTQWTSSIPSSGNHSVEPTGCPVIQTWCLYTP. Residues Asn369 and Asn374 are each glycosylated (N-linked (GlcNAc...) asparagine). A helical membrane pass occupies residues 407 to 427; that stretch reads VIHLAQYLTSDILIGVGYPIC. Residues 428 to 445 lie on the Cytoplasmic side of the membrane; it reads NVMSYTLYSKIIGPKPQG. Residues 446–466 form a helical membrane-spanning segment; sequence LYMGWLTAAGSAARTLGPVFV. Residues 467 to 476 lie on the Extracellular side of the membrane; the sequence is SQIYTHLGTR. A helical membrane pass occupies residues 477-497; the sequence is WTFGIICAFVALSLLHLTAVY. The Cytoplasmic portion of the chain corresponds to 498–510; that stretch reads KRLIPFSTRYERL.

It belongs to the major facilitator superfamily.

The protein resides in the lysosome membrane. Functionally, may be a carrier that transport small solutes by using chemiosmotic ion gradients. The sequence is that of Major facilitator superfamily domain-containing protein 8 (mfsd8) from Xenopus laevis (African clawed frog).